The sequence spans 349 residues: Fructose-1,6-bisphosphatase class 1 (349 aa).

Glu113, Asp135, Ile137, and Asp138 together coordinate Mg(2+). Residues 138 to 141 (DGSS), Asn230, Tyr258, and Lys288 contribute to the substrate site. Glu294 contacts Mg(2+).

It belongs to the FBPase class 1 family. In terms of assembly, homotetramer. The cofactor is Mg(2+).

Its subcellular location is the cytoplasm. It catalyses the reaction beta-D-fructose 1,6-bisphosphate + H2O = beta-D-fructose 6-phosphate + phosphate. Its pathway is carbohydrate biosynthesis; Calvin cycle. In Nostoc punctiforme (strain ATCC 29133 / PCC 73102), this protein is Fructose-1,6-bisphosphatase class 1.